Consider the following 294-residue polypeptide: MERVYRTDLKLLRYFLAVAEELHFGRAAARLNMSQPPLSIHIKELENQLGTQLFIRHSRSVVLTHAGKILMEESRRLLVNANNVLARIEQIGRGEAGRIELGVVGTAMWGRMRPVMRRFLRENPNVDVLFREKMPAMQMALLERRELDAGIWRMATEPPTGFTSLRLHESAFLVAMPEEHHLSSFSTVPLEALRDEYFVTMPPVYTDWDFLQRVCQQVGFSPVVIREVNEPQTVLAMVSMGIGITLIADSYAQMNWPGVIFRPLKQRIPADLYIVYETQQVTPAMVKLLAALTQ.

The region spanning Thr-7–Thr-64 is the HTH lysR-type domain. The H-T-H motif DNA-binding region spans Phe-24 to Lys-43.

This sequence belongs to the LysR transcriptional regulatory family.

Positive regulator required for the expression of xapA and xapB. Binds to the inducer xanthosine. The polypeptide is HTH-type transcriptional regulator XapR (xapR) (Escherichia coli (strain K12)).